Here is a 549-residue protein sequence, read N- to C-terminus: Frizzled-7-A (549 aa).

The first 22 residues, 1 to 22, serve as a signal peptide directing secretion; the sequence is MSSTVSLLFCCLFLQLCPSAQQ. Residues 23–231 lie on the Extracellular side of the membrane; the sequence is YHGEKGISVP…EEEVRFARLW (209 aa). The 120-residue stretch at 32–151 folds into the FZ domain; that stretch reads PDHGFCQPIS…HGAGEICVGQ (120 aa). 5 disulfide bridges follow: Cys37–Cys98, Cys45–Cys91, Cys82–Cys119, Cys108–Cys148, and Cys112–Cys136. Residue Asn51 is glycosylated (N-linked (GlcNAc...) asparagine). N-linked (GlcNAc...) asparagine glycosylation occurs at Asn152. Residues 232 to 252 traverse the membrane as a helical segment; it reads VGIWAILCCISTLFTVLTYLV. At 253–263 the chain is on the cytoplasmic side; the sequence is DMRRFSYPERP. The helical transmembrane segment at 264 to 284 threads the bilayer; that stretch reads IIFLSGCYFMVAVAYTAGFLL. The Extracellular portion of the chain corresponds to 285–311; that stretch reads EERAVCVERFSEDSYRTVAQGTKKEGC. A helical membrane pass occupies residues 312-332; sequence TILFMILYFFGMASSIWWVIL. At 333–354 the chain is on the cytoplasmic side; it reads SLTWFLSAGMKWGHEAIEANSQ. Residues 355-375 traverse the membrane as a helical segment; that stretch reads YFHLAAWAVPAVKTITILAMG. Topologically, residues 376–398 are extracellular; that stretch reads QVDGDVLSGVCYVGINSVDSLRG. A helical transmembrane segment spans residues 399–419; the sequence is FVLAPLFVYLFIGTSFLLAGF. Over 420–445 the chain is Cytoplasmic; that stretch reads VSLFRIRTIMKHDGTKTEKLEKLMVR. A helical transmembrane segment spans residues 446 to 466; sequence IGVFSVMYTVPATIVLACYFY. The Extracellular portion of the chain corresponds to 467–503; sequence EQAFRDTWEKTWLVQTCKGYAVPCPNYNFAPMSPDFT. A helical transmembrane segment spans residues 504 to 524; sequence VFMIKYLMTMIVGITSSFWIW. Over 525–549 the chain is Cytoplasmic; the sequence is SGKTLQSWRRFYHRLSNGSKGETAV. Positions 527-532 match the Lys-Thr-X-X-X-Trp motif, mediates interaction with the PDZ domain of Dvl family members motif; it reads KTLQSW. Positions 547 to 549 match the PDZ-binding motif; the sequence is TAV.

Belongs to the G-protein coupled receptor Fz/Smo family. As to quaternary structure, interacts with wnt11 and sdc4. The extracellular domain interacts with the extracellular domain of pcdh8/papc. In terms of tissue distribution, expressed in the animal region of cleavage stage embryos. During gastrulation, broadly expressed on the dorsal side of the embryo in deep mesodermal cells surrounding the blastopore lip and in presumptive anterior neuroectoderm. During neurulation, becomes progressively more restricted to the dorsal epidermis, neural plate, and neural tube. Expressed in the cranial neural crest of neurulae and tailbud embryos as well as the pronephros of tailbud embryos. Localized to the brain of neurulae, tailbud embryos and tadpoles. In tadpoles, strongly expressed in the eye and developing heart.

The protein resides in the cell membrane. Its subcellular location is the endosome membrane. Its function is as follows. Receptor for Wnt proteins. Acts in both canonical and non-canonical Wnt pathways. Although different papers report differing Wnt preferences, wnt5a, wnt8b and wnt11 have been proposed as synergists. In the canonical Wnt pathway, acts via beta-catenin to promote the expression of the dorsal genes siamois, twin and nodal3 and to establish the dorsal axis of the embryo and induce dorsal mesoderm formation. In a non-canonical Wnt/planar cell polarity (PCP) pathway, acts with sdc4 and dvl2/dsh to regulate convergent extension cell movements during gastrulation. Triggers phosphorylation of dvl2/dsh and its translocation to the plasma membrane. In a third branch of Wnt signaling, acts in a non-canonical pathway via trimeric G proteins, and independently of dvl2/dsh, to recruit protein kinase C (PKC) to the membrane and thus activate PKC. PKC signaling controls cell sorting and tissue separation during gastrulation. This is Frizzled-7-A (fzd7-a) from Xenopus laevis (African clawed frog).